A 413-amino-acid polypeptide reads, in one-letter code: Synaptosomal-associated protein 47 (413 aa).

Residues 109–171 (AANIPSHVTR…DVADRLLTEL (63 aa)) enclose the t-SNARE coiled-coil homology 1 domain. The interval 321–342 (RHAASRPKGCTPHRELPTGGQE) is disordered. A t-SNARE coiled-coil homology 2 domain is found at 350–412 (KNLPLFSEGE…DKQNRRMRKL (63 aa)).

This sequence belongs to the SVAP1 family. In terms of assembly, associates with the BLOC-1 complex. Interacts with BLOC1S6. Forms a complex containing SNAP47, VAMP2 and STX1A. In terms of tissue distribution, ubiquitously expressed with the most abundant expression in the brain. In brain, most highly expressed in the glomerular layer of the olfactory bulb, the cortex, striatum, hippocampus, and colliculi (at protein level).

The protein localises to the endomembrane system. The protein resides in the cytoplasm. It localises to the perinuclear region. In terms of biological role, may play a role in intracellular membrane fusion. This is Synaptosomal-associated protein 47 (Snap47) from Mus musculus (Mouse).